Reading from the N-terminus, the 392-residue chain is p21-activated protein kinase-interacting protein 1 (392 aa).

5 WD repeats span residues 40 to 77 (AHTASLSAVAVNSRFVVTGSKDETIHIYDMKKKVDHGA), 80 to 118 (HHNGTITCLKFHGNRHLISGAEDGLICVWDARRWECLKS), 121 to 160 (AHKGHVTFLSIHPSGRLALSVGTDKTLRTWNLVEGRSAFI), 202 to 240 (TNERRVSSVTFLSESVLTVAGDEEVVRFFDCDSLTCLSE), and 243 to 284 (AHEN…KVSP). The tract at residues 309 to 392 (TKESPPAAAE…RKKKKIRMMQ (84 aa)) is disordered. Over residues 325–351 (EQSRRNKEESGHAVQEEEKQPKPDTEK) the composition is skewed to basic and acidic residues. The span at 355-368 (TGDSNKPTRGNSLV) shows a compositional bias: polar residues. Basic residues predominate over residues 381 to 392 (KKRKKKKIRMMQ).

Interacts with PAK1.

It localises to the nucleus. The protein resides in the nucleolus. Negatively regulates the PAK1 kinase. PAK1 is a member of the PAK kinase family, which has been shown to play a positive role in the regulation of signaling pathways involving MAPK8 and RELA. PAK1 exists as an inactive homodimer, which is activated by binding of small GTPases such as CDC42 to an N-terminal regulatory domain. PAK1IP1 also binds to the N-terminus of PAK1, and inhibits the specific activation of PAK1 by CDC42. May be involved in ribosomal large subunit assembly. This is p21-activated protein kinase-interacting protein 1 (PAK1IP1) from Bos taurus (Bovine).